The chain runs to 105 residues: Thioredoxin (105 aa).

In terms of domain architecture, Thioredoxin spans Met1 to Ile105. Cysteines 30 and 33 form a disulfide.

This sequence belongs to the thioredoxin family.

Its function is as follows. Component of the thioredoxin-thioredoxin reductase system. Participates in various redox reactions through the reversible oxidation of its active center dithiol to a disulfide and catalyzes dithiol-disulfide exchange reactions. This chain is Thioredoxin (trxA), found in Rickettsia prowazekii (strain Madrid E).